The primary structure comprises 790 residues: Lon protease 2 (790 aa).

The 193-residue stretch at 18–210 folds into the Lon N-terminal domain; it reads LRILPLRNMV…HVTFYMTRQL (193 aa). 362 to 369 contacts ATP; that stretch reads GPPGVGKT. One can recognise a Lon proteolytic domain in the interval 598–779; sequence SWGCGIATGL…SDVLQLALLP (182 aa). Active-site residues include serine 685 and lysine 728.

This sequence belongs to the peptidase S16 family. As to quaternary structure, homohexamer. Organized in a ring with a central cavity.

Its subcellular location is the cytoplasm. It catalyses the reaction Hydrolysis of proteins in presence of ATP.. ATP-dependent serine protease that mediates the selective degradation of mutant and abnormal proteins as well as certain short-lived regulatory proteins. Required for cellular homeostasis and for survival from DNA damage and developmental changes induced by stress. Degrades polypeptides processively to yield small peptide fragments that are 5 to 10 amino acids long. Binds to DNA in a double-stranded, site-specific manner. This is Lon protease 2 from Syntrophobacter fumaroxidans (strain DSM 10017 / MPOB).